The sequence spans 433 residues: Arrestin domain-containing protein 1 (433 aa).

Disordered stretches follow at residues 296 to 322 (GLGLPPGAPPLVVPSAPPQEEAEAEAA) and 349 to 372 (LSSVPGAPEPCPQDGSPASHPLHP). Residues 301–312 (PGAPPLVVPSAP) show a composition bias toward pro residues. 2 consecutive short sequence motifs (PPxY motif) follow at residues 402 to 405 (PPEY) and 415 to 418 (PPSY).

Belongs to the arrestin family. Interacts (via PPxY motifs) with ITCH (via WW domains); the interaction is direct and participates in the recruitment of the ubiquitin-protein ligase ITCH to the NOTCH1 receptor. Interacts with ARRB1 and ARRB2; the interaction is direct. Interacts with TSG101; may recruit TSG101 to the plasma membrane. Interacts (via PPxY motifs) with WWP2 (via WW domains); ubiquitinates ARRDC1. Interacts with SLC11A2; controls the incorporation of SLC11A2 into extracellular vesicles through an ubiquitination-dependent mechanism. Interacts with WWP1 (via WW domains). Interacts with NEDD4 (via WW domains). Interacts with PDCD6IP. Post-translationally, ubiquitinated. Ubiquitination by WWP2; promotes localization to extracellular microvesicles. Ubiquitinated by WWP1.

It is found in the cell membrane. In terms of biological role, functions as an adapter recruiting ubiquitin-protein ligases to their specific substrates. Through an ubiquitination-dependent mechanism plays for instance a role in the incorporation of SLC11A2 into extracellular vesicles. More generally, plays a role in the extracellular transport of proteins between cells through the release in the extracellular space of microvesicles. By participating in the ITCH-mediated ubiquitination and subsequent degradation of NOTCH1, negatively regulates the NOTCH signaling pathway. This chain is Arrestin domain-containing protein 1, found in Homo sapiens (Human).